The chain runs to 85 residues: Phosphocarrier protein HPr (85 aa).

Residues 1 to 85 (MFQRDIKITT…DLAKFLTTLK (85 aa)) form the HPr domain. His-15 serves as the catalytic Pros-phosphohistidine intermediate.

Belongs to the HPr family.

Its subcellular location is the cytoplasm. In terms of biological role, general (non sugar-specific) component of the phosphoenolpyruvate-dependent sugar phosphotransferase system (sugar PTS). This major carbohydrate active-transport system catalyzes the phosphorylation of incoming sugar substrates concomitantly with their translocation across the cell membrane. The phosphoryl group from phosphoenolpyruvate (PEP) is transferred to the phosphoryl carrier protein HPr by enzyme I. Phospho-HPr then transfers it to the PTS EIIA domain. The polypeptide is Phosphocarrier protein HPr (ptsH) (Buchnera aphidicola subsp. Baizongia pistaciae (strain Bp)).